A 199-amino-acid polypeptide reads, in one-letter code: Elongation factor Ts (199 aa).

Residues 81-84 (TDFV) form an involved in Mg(2+) ion dislocation from EF-Tu region.

It belongs to the EF-Ts family.

The protein localises to the cytoplasm. Associates with the EF-Tu.GDP complex and induces the exchange of GDP to GTP. It remains bound to the aminoacyl-tRNA.EF-Tu.GTP complex up to the GTP hydrolysis stage on the ribosome. The polypeptide is Elongation factor Ts (Thermotoga sp. (strain RQ2)).